Consider the following 757-residue polypeptide: Two pore calcium channel protein 1 (757 aa).

At 1-94 (MRERGEMREA…NDTRFERAMR (94 aa)) the chain is on the cytoplasmic side. A disordered region spans residues 24 to 48 (HSHGSGSSGTGSHTSGGGGGWRGSR). Positions 29 to 45 (GSSGTGSHTSGGGGGWR) are enriched in gly residues. A helical membrane pass occupies residues 95 to 115 (FYFVYLRLDWLWSLNLFALIL). Over 116–152 (LNFLEKPLWCRGYSQHACDQRDLYFLGQLPYLSKTES) the chain is Extracellular. The chain crosses the membrane as a helical span at residues 153-173 (LIYEGLTLVILVMDIFYPLSY). At 174 to 188 (EGLNLFWKNTINKLK) the chain is on the cytoplasmic side. Residues 189–209 (VLLLFILACDILVFAFSPQPF) traverse the membrane as a helical segment. Residue R210 is a topological domain, extracellular. Residues 211 to 228 (VAPYIRVAFLIMNIRELR) form a helical; Voltage-sensor membrane-spanning segment. At 229-233 (MCAVT) the chain is on the cytoplasmic side. A helical transmembrane segment spans residues 234–254 (LVGMVGTYLNVLALSLLFLLF). Residues 255–270 (ASWLAYVTFEDTPQGK) are Extracellular-facing. The pore-forming intramembrane region spans 271 to 285 (TVFSSYGTTLYQMFI). The Extracellular segment spans residues 286 to 308 (LFTTSNNPDVWVPAYKSSRWSSL). A helical membrane pass occupies residues 309-329 (FFIVYVLLGVYFLTNLILAVI). Over 330-453 (YDSFKEQLAK…LCEWLKSFVR (124 aa)) the chain is Cytoplasmic. EF-hand domains lie at 347–382 (TRKSILEKAFGIIDATGQGYLNKEQCLSLLDELNKY) and 388–423 (TSREDFELIFAELDQSGDFKVTSEEFATLCNTIAIK). Residues 454–474 (SPLFEYIVIFVLLMNLVAVII) traverse the membrane as a helical segment. At 475–493 (ETTLDIENSSSQKVWQEVE) the chain is on the extracellular side. N-linked (GlcNAc...) asparagine glycosylation occurs at N482. A helical transmembrane segment spans residues 494–514 (FVFGWIYVIEMALKIFSLGFG). Residues 515-523 (AYWMEGQNK) lie on the Cytoplasmic side of the membrane. The chain crosses the membrane as a helical span at residues 524–544 (FDFVLTWTIFIGETLTFAFPS). Residues 545-553 (KLSFLSNGE) are Extracellular-facing. The chain crosses the membrane as a helical; Voltage-sensor span at residues 554 to 571 (WIRYLLLGRMLRLTRILL). Topologically, residues 572–595 (QVRRFRAFVATFFTLMSSLMPYLG) are cytoplasmic. Residues 596 to 616 (IVFCTLCIYCSLGLQIFGGIV) traverse the membrane as a helical segment. Topologically, residues 617 to 640 (YAGNPTLEETDLFSNDYLLFNFND) are extracellular. An intramembrane region (pore-forming) is located at residues 641-655 (YPSGMVTLFNLLVMG). Over 656–676 (NWQAWMESYRQLTGSYWSLIY) the chain is Extracellular. Residues 677 to 697 (FVSFYLISVLLLLNLIVAFVL) traverse the membrane as a helical segment. Residues 698–757 (EAFFAEMELEKDGEADIQDPTLEGRNRRRSVRVRTKGTMVDILLHHMLSNELDGSQNRDQ) lie on the Cytoplasmic side of the membrane.

Belongs to the calcium channel alpha-1 subunit (TC 1.A.1.11) family. Two pore calcium channel subfamily. Homodimer. Expressed in shoot, mature leaf, cultured cells, and at lower level in roots.

It is found in the membrane. Its activity is regulated as follows. Inhibited by the VDCC blocker verapamil in yeast cells. Channel activity may be down-regulated by cytosolic Ca(2+) in rice cells. Inhibited by Al(3+). Its function is as follows. May function as one of the major voltage-gated Ca(2+) channel (VDCC) across the plasma membrane. May be involved in the regulation of cytosolic Ca(2+) and in growth and development. Acts as the major ROS-responsive Ca(2+) channel and is the possible target of Al-dependent inhibition. Determines sensitivity to T.viride xylanase elicitor. Plays a regulatory role in elicitor-induced defense responses and hypersensitive cell death. In Oryza sativa subsp. japonica (Rice), this protein is Two pore calcium channel protein 1 (TPC1).